The primary structure comprises 54 residues: Ovomucoid (54 aa).

The Kazal-like domain maps to 4 to 54 (VDCSDYPRPVCTLDYMPLCGSDNKTYSNKCNFCNAVVDSNGTITLSHFGRC). 3 cysteine pairs are disulfide-bonded: cysteine 6–cysteine 36, cysteine 14–cysteine 33, and cysteine 22–cysteine 54. N-linked (GlcNAc...) asparagine glycosylation is present at asparagine 43.

It is found in the secreted. In Corvus albus (Pied crow), this protein is Ovomucoid.